The primary structure comprises 302 residues: Lipooligosaccharide biosynthesis protein lex-1 (302 aa).

Tandem repeats lie at residues 42-45 (SINQ), 46-49 (SINQ), 50-53 (SINQ), 54-57 (SINQ), 58-61 (SINQ), 62-65 (SINQ), and 66-69 (SINQ). The tract at residues 42–69 (SINQSINQSINQSINQSINQSINQSINQ) is 7 X 4 AA tandem repeats of S-I-N-Q.

This sequence belongs to the glycosyltransferase 25 family.

In terms of biological role, involved in extracellular lipooligosaccharide (LOS) biosynthesis and virulence expression. Involved in the synthesis of the oligosaccharide moiety of the LOS molecule by adding GalNAc. This chain is Lipooligosaccharide biosynthesis protein lex-1 (lex1), found in Haemophilus influenzae (strain ATCC 51907 / DSM 11121 / KW20 / Rd).